The sequence spans 331 residues: D-alanine--D-alanine ligase (331 aa).

One can recognise an ATP-grasp domain in the interval 122 to 328 (KLWYDAIGIP…FHEFLADCIE (207 aa)). 152–207 (AFDKWGKLFVKAARQGSSVGCYSVTNIEQLSDAIDKAFGFSHQVLVEKAVKPRELE) is an ATP binding site. Mg(2+)-binding residues include aspartate 282, glutamate 295, and asparagine 297.

It belongs to the D-alanine--D-alanine ligase family. It depends on Mg(2+) as a cofactor. Mn(2+) serves as cofactor.

The protein localises to the cytoplasm. The catalysed reaction is 2 D-alanine + ATP = D-alanyl-D-alanine + ADP + phosphate + H(+). Its pathway is cell wall biogenesis; peptidoglycan biosynthesis. Cell wall formation. The chain is D-alanine--D-alanine ligase from Vibrio vulnificus (strain YJ016).